A 118-amino-acid chain; its full sequence is MTALTQAHCEACRADAPHVSDEELPVLLRQIPDWNIEVRDGIMQLEKVYLFKNFKHALAFTNAVGEISEAEGHHPGLLTEWGKVTVTWWSHSIKGLHRNDFIMAARTDEVAKTAEGRK.

The protein belongs to the pterin-4-alpha-carbinolamine dehydratase family.

It catalyses the reaction (4aS,6R)-4a-hydroxy-L-erythro-5,6,7,8-tetrahydrobiopterin = (6R)-L-erythro-6,7-dihydrobiopterin + H2O. The polypeptide is Putative pterin-4-alpha-carbinolamine dehydratase (Pseudomonas aeruginosa (strain LESB58)).